A 489-amino-acid chain; its full sequence is Probable anthranilate synthase component 1 (489 aa).

Residues serine 54 and 262–264 (PYM) each bind L-tryptophan. Chorismate is bound at residue 297 to 298 (GT). Residue glutamate 324 coordinates Mg(2+). Phosphoserine occurs at positions 390 and 392. Chorismate contacts are provided by residues tyrosine 412, arginine 433, 447–449 (GGG), and glycine 449. Mg(2+) is bound at residue glutamate 462. Serine 488 is subject to Phosphoserine.

Belongs to the anthranilate synthase component I family. In terms of assembly, tetramer of two components I and two components II. Mg(2+) serves as cofactor.

The catalysed reaction is chorismate + L-glutamine = anthranilate + pyruvate + L-glutamate + H(+). Its pathway is amino-acid biosynthesis; L-tryptophan biosynthesis; L-tryptophan from chorismate: step 1/5. The polypeptide is Probable anthranilate synthase component 1 (trp3) (Schizosaccharomyces pombe (strain 972 / ATCC 24843) (Fission yeast)).